A 242-amino-acid chain; its full sequence is MSGHSKWHNIQGRKNAQDAKRGKVFQKLSREIYMAAKSGGPDPDGNPALRMVIDKARSNNMPKDNIQRAIKKAEGGSDEHYDEITYEGYAPGGVAVFVEALTDNKNRTASDVRVAFTRNGGSLGATGSVAYMFDRKGYIVIDRSTTDADEDQVLLDVMDAGGDDLQTSDDAYEIYTDPKQFAEVRDALIKAGYKLADAELTMIPQNTTPVPADKKEQFEHLVEALEDSDDVQNVYTAAADED.

The disordered stretch occupies residues 1 to 22 (MSGHSKWHNIQGRKNAQDAKRG).

Belongs to the TACO1 family.

Its subcellular location is the cytoplasm. In Lactobacillus acidophilus (strain ATCC 700396 / NCK56 / N2 / NCFM), this protein is Probable transcriptional regulatory protein LBA0733.